We begin with the raw amino-acid sequence, 158 residues long: MFAVIKTGGKQYRVVANQVVRVEKIIGNAGDVVEFNDILMAGQEDNAIIGAPVVRDALVTAEIIEQARARKVIAFKKRRRQNSKRTRGHRQEVTTLRILEILTGGLKPKKAVAKSIKEEAAVLKATTQETKSAASVKKAAKKSAPQKQAAVASNSKED.

Residues 127-158 (TQETKSAASVKKAAKKSAPQKQAAVASNSKED) form a disordered region. Residues 131-158 (KSAASVKKAAKKSAPQKQAAVASNSKED) show a composition bias toward low complexity.

It belongs to the bacterial ribosomal protein bL21 family. In terms of assembly, part of the 50S ribosomal subunit. Contacts protein L20.

This protein binds to 23S rRNA in the presence of protein L20. The sequence is that of Large ribosomal subunit protein bL21 from Bartonella henselae (strain ATCC 49882 / DSM 28221 / CCUG 30454 / Houston 1) (Rochalimaea henselae).